The primary structure comprises 901 residues: Protein translocase subunit SecA (901 aa).

ATP is bound by residues Gln-87, 105-109 (GEGKT), and Asp-512. Residues 859 to 901 (HQDDDSAAAAALAAQTGERKVGRNDPCPCGSGKKYKQCHGRLQ) form a disordered region. Positions 885, 887, 896, and 897 each coordinate Zn(2+). The span at 891–901 (KKYKQCHGRLQ) shows a compositional bias: basic residues.

The protein belongs to the SecA family. As to quaternary structure, monomer and homodimer. Part of the essential Sec protein translocation apparatus which comprises SecA, SecYEG and auxiliary proteins SecDF-YajC and YidC. Requires Zn(2+) as cofactor.

Its subcellular location is the cell inner membrane. The protein resides in the cytoplasm. The catalysed reaction is ATP + H2O + cellular proteinSide 1 = ADP + phosphate + cellular proteinSide 2.. Its function is as follows. Part of the Sec protein translocase complex. Interacts with the SecYEG preprotein conducting channel. Has a central role in coupling the hydrolysis of ATP to the transfer of proteins into and across the cell membrane, serving both as a receptor for the preprotein-SecB complex and as an ATP-driven molecular motor driving the stepwise translocation of polypeptide chains across the membrane. The sequence is that of Protein translocase subunit SecA from Escherichia coli O6:K15:H31 (strain 536 / UPEC).